The primary structure comprises 95 residues: uncharacterized protein (95 aa).

This is an uncharacterized protein from Bacillus anthracis.